The following is a 401-amino-acid chain: Pleckstrin homology-like domain family A member 1 (401 aa).

Disordered stretches follow at residues 39–67, 190–222, and 293–401; these read IQKR…ARSS, QQQQ…AVAS, and KSTR…SNSA. Residues 151–283 form the PH domain; sequence LKEGVLEKRS…AEITLQMVQY (133 aa). A compositionally biased stretch (low complexity) spans 190-204; the sequence is QQQQQQQQQQQQQQQ. The segment covering 308 to 344 has biased composition (pro residues); it reads PSQPQPQPQLQPQPQPQPQPQPQPQSQPQPQPQPKPQ. The segment at 311 to 346 is 15 X 2 AA repeats of P-Q; sequence PQPQPQLQPQPQPQPQPQPQPQSQPQPQPQPKPQPQ. Basic residues predominate over residues 352–378; it reads PHPHPHPHSHPHSHPHPHPHPHPHQIP. Positions 352–389 are 14 X 2 AA repeats of P-H; it reads PHPHPHPHSHPHSHPHPHPHPHPHQIPHPHPQPHSQPH.

As to quaternary structure, interacts with RPL14, EIF3S7 and PABPC4. Widely expressed with highest levels in pancreas. Strongly expressed by benign melanocytic nevi, and progressively reduced expressed in primary and metastatic melanomas (at protein level).

The protein localises to the cytoplasm. Its subcellular location is the cytoplasmic vesicle. The protein resides in the nucleus. It is found in the nucleolus. Its function is as follows. Seems to be involved in regulation of apoptosis. May be involved in detachment-mediated programmed cell death. May mediate apoptosis during neuronal development. May be involved in regulation of anti-apoptotic effects of IGF1. May be involved in translational regulation. The protein is Pleckstrin homology-like domain family A member 1 (PHLDA1) of Homo sapiens (Human).